Consider the following 494-residue polypeptide: Nuclear distribution protein PAC1 (494 aa).

The region spanning 14–46 is the LisH domain; it reads QKNELDKSVLRYLNWNYKQTVRHEHAQDYESVR. Residues 90-123 adopt a coiled-coil conformation; it reads NSIVRLQKKIIELEQNTETLVSQIKDLNTQVSEL. 7 WD repeats span residues 153 to 192, 196 to 244, 251 to 292, 295 to 334, 347 to 395, 415 to 454, and 457 to 492; these read NVESSVTSVKLHPNLPIVFVATDHGKLYAFDLFNYTIPLA, SHTK…CKFQ, GHEH…SLKT, PHSQWVRSIDVLGDYIISGSHDTTLRLTHWPSGNGLSVGT, HFIE…LMAH, GHLSWVRDISIRGQYLFSCADDKSVRCWDLNTGQCLHVWE, and HTGFVNCLDLDVDFDSNVTPRQMMVTGGLDCKSNVF.

The protein belongs to the WD repeat LIS1/nudF family. Self-associates. Interacts with NDL1 and dynein.

It localises to the cytoplasm. Its subcellular location is the cytoskeleton. It is found in the spindle pole. Positively regulates the activity of the minus-end directed microtubule motor protein dynein. Plays a central role in positioning the mitotic spindle at the bud neck during cell division. Targets cytoplasmic dynein to microtubule plus ends, thereby promoting dynein-mediated microtubule sliding along the bud cortex and consequently the movement of the mitotic spindle to the bud neck. The sequence is that of Nuclear distribution protein PAC1 from Saccharomyces cerevisiae (strain YJM789) (Baker's yeast).